The sequence spans 1003 residues: UPF0182 protein Mkms_1433 (1003 aa).

7 helical membrane-spanning segments follow: residues 18-38 (VLIG…RFID), 63-83 (VVVF…GLAL), 114-134 (LFGF…AQSY), 176-196 (FVAT…FGGI), 211-231 (IQLV…YWLD), 260-280 (KLIL…AIVL), and 288-308 (IGVV…PLVV). Residues 902–937 (ATGPAPANLPDGQPAAQPPNGQQPAAQTPGNQAGRA) are compositionally biased toward low complexity. The segment at 902 to 979 (ATGPAPANLP…MSGLQDAQRS (78 aa)) is disordered.

Belongs to the UPF0182 family.

Its subcellular location is the cell membrane. The sequence is that of UPF0182 protein Mkms_1433 from Mycobacterium sp. (strain KMS).